The chain runs to 195 residues: GRF1-interacting factor 2 (195 aa).

Positions 166 to 195 (QQPETGLGGNVGLRGGKQDGADGQGKDDGK) are disordered. Over residues 171 to 180 (GLGGNVGLRG) the composition is skewed to gly residues. Residues 181 to 195 (GKQDGADGQGKDDGK) are compositionally biased toward basic and acidic residues.

This sequence belongs to the SS18 family. Interacts with GRF1. As to expression, predominantly expressed in shoot tips containing the shoot apical meristem (SAM) and flower buds. Also expressed in mature flowers.

Functionally, transcription coactivator that plays a role in the regulation of cell expansion in leaf and cotyledons tissues. Component of a network formed by miR396, the GRFs and their interacting factors (GIFs) acting in the regulation of meristem function, at least partially through the control of cell proliferation. GIFs are involved in the positive regulation of cell proliferation of lateral organs in a functionally redundant manner. This chain is GRF1-interacting factor 2 (GIF2), found in Arabidopsis thaliana (Mouse-ear cress).